A 1188-amino-acid polypeptide reads, in one-letter code: DNA-directed RNA polymerase subunit beta (1188 aa).

It belongs to the RNA polymerase beta chain family. In terms of assembly, the RNAP catalytic core consists of 2 alpha, 1 beta, 1 beta' and 1 omega subunit. When a sigma factor is associated with the core the holoenzyme is formed, which can initiate transcription.

The enzyme catalyses RNA(n) + a ribonucleoside 5'-triphosphate = RNA(n+1) + diphosphate. Its function is as follows. DNA-dependent RNA polymerase catalyzes the transcription of DNA into RNA using the four ribonucleoside triphosphates as substrates. This Streptococcus equi subsp. equi (strain 4047) protein is DNA-directed RNA polymerase subunit beta.